An 836-amino-acid chain; its full sequence is MARKKKVEDEVKELEEFEELDVEESLSSSDKQSKPEKKISALEDLPGVGPATAEKLREAGYDTIEAIAVASPLELKEIAGISEGAALKIIQAAREAANIGTFMRADEYMKRRTTIGKISTGSKALDKLLGGGIETQAITEVFGEFGSGKCFAKDTKVYYENDTLVHFESIEDMYHKYASLGREVPFDNGYAVPLETVSVYTFDPKTGEVKRTKASYIYREKVEKLAEIRLSNGYLLRITLLHPVLVFRNGLQWVPAGMIKPGDLIVGIRSVPANAATIEESEAYFLGLFVAEGTSNPLSITTGSEELKDFIVSFIEDHDGYTPTVEVRRGLYRILFRKKTAEWLGELATSNASTKVVPERVLNAGESAIAAFLAGYLDGDGYLTESIVELVTKSRELADGLVFLLKRLGITPRISQKTIEGSVYYRIYITGEDRKTFEKVLEKSRIKPGEMNEGGVGRYPPALGKFLGKLYSEFRLPKRDNETAYHILTRSRNVWFTEKTLSRIEEYFREALEKLSEARKALEMGDKPELPFPWTAITKYGFTDRQVANYRTRGLPKRPELKEKVVSALLKEIERLEGVAKLALETIELARRLEFHEVSSVEVVDYNDWVYDLVIPETHNFIAPNGLVLHNTQLAHTLAVMVQKPPEEGGLGGSVIWIDTENTFRPERIKQIAENRGLDPEETLKNIYVARAFNSNHQMLLVEKAEEIIKEKAESDRPVKLLVVDSLMAHFRAEYVGRGTLAERQQKLAKHLADLHRLADLYDIAVFVTNQVQAKPDAFFGDPTRPVGGHILAHSATLRVYLRKGKAGKRVARLIDSPHLPEGEAVFRITEKGVED.

Over residues Glu15–Glu24 the composition is skewed to acidic residues. The interval Glu15–Ala41 is disordered. Residues Lys31–Ala41 show a composition bias toward basic and acidic residues. The DOD-type homing endonuclease domain occupies Phe285 to Ile410.

Belongs to the eukaryotic RecA-like protein family. Post-translationally, this protein undergoes a protein self splicing that involves a post-translational excision of the intervening region (intein) followed by peptide ligation.

In terms of biological role, involved in DNA repair and in homologous recombination. Binds and assemble on single-stranded DNA to form a nucleoprotein filament. Hydrolyzes ATP in a ssDNA-dependent manner and promotes DNA strand exchange between homologous DNA molecules. This Thermococcus kodakarensis (strain ATCC BAA-918 / JCM 12380 / KOD1) (Pyrococcus kodakaraensis (strain KOD1)) protein is DNA repair and recombination protein RadA (radA).